The chain runs to 385 residues: Cyclin-A3-2 (385 aa).

Residues 1 to 110 (MADKENSTPA…STSTASPSSG (110 aa)) form a disordered region. Composition is skewed to low complexity over residues 7-41 (STPA…GAPP), 74-88 (PSSK…AAAP), and 96-110 (PVSS…PSSG).

It belongs to the cyclin family. Cyclin AB subfamily.

This Oryza sativa subsp. japonica (Rice) protein is Cyclin-A3-2 (CYCA3-2).